A 156-amino-acid polypeptide reads, in one-letter code: Ribosome maturation factor RimP (156 aa).

The protein belongs to the RimP family.

It localises to the cytoplasm. In terms of biological role, required for maturation of 30S ribosomal subunits. This Anoxybacillus flavithermus (strain DSM 21510 / WK1) protein is Ribosome maturation factor RimP.